The sequence spans 349 residues: tRNA pseudouridine synthase D (349 aa).

Residue phenylalanine 27 coordinates substrate. The active-site Nucleophile is the aspartate 80. Asparagine 129 serves as a coordination point for substrate. Positions 155-303 constitute a TRUD domain; the sequence is GVPNYFGAQR…VEAARRAMLL (149 aa). Phenylalanine 329 is a substrate binding site.

Belongs to the pseudouridine synthase TruD family.

The enzyme catalyses uridine(13) in tRNA = pseudouridine(13) in tRNA. Its function is as follows. Responsible for synthesis of pseudouridine from uracil-13 in transfer RNAs. This chain is tRNA pseudouridine synthase D, found in Shigella sonnei (strain Ss046).